The chain runs to 360 residues: MIIYATEVQTINSFVRLESLKEVYGFIWIFVPIFSLVLGIITGVLVIVWLEREISAGIQQRIGPEYAGPLGILQALADGTKLLFKEDLRPSRGNTPLFSIGPSIAVISILLSYSIIPFSNHLVLADLNIGIFLWIAISSIAPIGLLMSGYGSNNKYSFLGGLRAAAQSISYEIPLTLCVLSISLLSNSLSTVDIVEAQSKYGFWGWNLWRQPIGFIIFLISSLAECERLPFDLPEAEEELIAGYQTEYSGIKFGLFYVASYLNLLISSLFVTVLYLGGWNISIPHISILKLFEGDQIFGTTIGIFITLAKTYLFLFISIATRWTLPRLRMDQLLNLGWKFLLPISLGNLLLTTSFQLFSL.

8 consecutive transmembrane segments (helical) span residues 27 to 47 (IWIFVPIFSLVLGIITGVLVI), 98 to 118 (FSIGPSIAVISILLSYSIIPF), 129 to 149 (IGIFLWIAISSIAPIGLLMSG), 165 to 185 (AAQSISYEIPLTLCVLSISLL), 203 to 223 (FWGWNLWRQPIGFIIFLISSL), 253 to 273 (FGLFYVASYLNLLISSLFVTV), 297 to 317 (IFGTTIGIFITLAKTYLFLFI), and 340 to 360 (FLLPISLGNLLLTTSFQLFSL).

Belongs to the complex I subunit 1 family. In terms of assembly, NDH is composed of at least 16 different subunits, 5 of which are encoded in the nucleus.

Its subcellular location is the plastid. The protein localises to the chloroplast thylakoid membrane. The enzyme catalyses a plastoquinone + NADH + (n+1) H(+)(in) = a plastoquinol + NAD(+) + n H(+)(out). It carries out the reaction a plastoquinone + NADPH + (n+1) H(+)(in) = a plastoquinol + NADP(+) + n H(+)(out). Functionally, NDH shuttles electrons from NAD(P)H:plastoquinone, via FMN and iron-sulfur (Fe-S) centers, to quinones in the photosynthetic chain and possibly in a chloroplast respiratory chain. The immediate electron acceptor for the enzyme in this species is believed to be plastoquinone. Couples the redox reaction to proton translocation, and thus conserves the redox energy in a proton gradient. In Lobularia maritima (Sweet alyssum), this protein is NAD(P)H-quinone oxidoreductase subunit 1, chloroplastic.